The primary structure comprises 183 residues: Adenylate kinase (183 aa).

12-17 lines the ATP pocket; that stretch reads GAGKGT. The segment at 32–61 is NMP; that stretch reads STGDLLRSEVAAGTALGQEAEAVMNRGELV. AMP-binding positions include Thr-33, Arg-38, 59-61, 86-89, and Gln-93; these read ELV and GFPR. The segment at 127–133 is LID; the sequence is ARGRDDD. An ATP-binding site is contributed by Arg-128. Arg-130 and Arg-141 together coordinate AMP. Position 169 (Gly-169) interacts with ATP.

The protein belongs to the adenylate kinase family. Monomer.

The protein localises to the cytoplasm. The catalysed reaction is AMP + ATP = 2 ADP. The protein operates within purine metabolism; AMP biosynthesis via salvage pathway; AMP from ADP: step 1/1. In terms of biological role, catalyzes the reversible transfer of the terminal phosphate group between ATP and AMP. Plays an important role in cellular energy homeostasis and in adenine nucleotide metabolism. This chain is Adenylate kinase, found in Parasynechococcus marenigrum (strain WH8102).